We begin with the raw amino-acid sequence, 198 residues long: Syndecan-4 (198 aa).

The N-terminal stretch at 1-18 (MAPARLFALLLFFVGGVA) is a signal peptide. Residues 19–145 (ESIRETEVID…QGSNIFERTE (127 aa)) are Extracellular-facing. Residues serine 39, serine 61, and serine 63 are each glycosylated (O-linked (Xyl...) (glycosaminoglycan) serine). Serine 95 carries O-linked (Xyl...) (chondroitin sulfate) serine glycosylation. Residues 146–170 (VLAALIVGGIVGILFAVFLILLLMY) traverse the membrane as a helical segment. Topologically, residues 171-198 (RMKKKDEGSYDLGKKPIYKKAPTNEFYA) are cytoplasmic.

It belongs to the syndecan proteoglycan family. As to quaternary structure, homodimer. Interacts (via its cytoplasmic domain) with GIPC (via its PDZ domain). Interacts (via its cytoplasmic domain) with NUDT16L1. Interacts with CDCP1 and SDCBP. Interacts with DNM2; this interaction is markedly enhanced at focal ahesion site upon induction of focal adhesions and stress-fiber formation. Shedding is enhanced by a number of factors such as heparanase, thrombin or EGF. Also by stress and wound healing. PMA-mediated shedding is inhibited by TIMP3. Post-translationally, O-glycosylated; contains both chondroitin sulfate and heparan sulfate. Ser-39, Ser-61 and Ser-63 can all be modified by either chondroitin sulfate or heparan sulfate, and the protein exists in forms that contain only chondroitin sulfate, only heparan sulfate and both chondroitin sulfate and heparan sulfate. In terms of tissue distribution, detected in fibroblasts (at protein level). Also expressed in epithelial cells.

It is found in the membrane. The protein localises to the secreted. Its function is as follows. Cell surface proteoglycan which regulates exosome biogenesis in concert with SDCBP and PDCD6IP. This chain is Syndecan-4, found in Homo sapiens (Human).